The primary structure comprises 300 residues: N-acetylmuramic acid 6-phosphate etherase 1 (300 aa).

Residues 59 to 222 enclose the SIS domain; sequence AAERFKKGGR…STGIMVKVGN (164 aa). Residue Glu87 is the Proton donor of the active site. Glu118 is a catalytic residue.

This sequence belongs to the GCKR-like family. MurNAc-6-P etherase subfamily. In terms of assembly, homodimer.

The enzyme catalyses N-acetyl-D-muramate 6-phosphate + H2O = N-acetyl-D-glucosamine 6-phosphate + (R)-lactate. Its pathway is amino-sugar metabolism; N-acetylmuramate degradation. Specifically catalyzes the cleavage of the D-lactyl ether substituent of MurNAc 6-phosphate, producing GlcNAc 6-phosphate and D-lactate. This chain is N-acetylmuramic acid 6-phosphate etherase 1, found in Enterococcus faecalis (strain ATCC 700802 / V583).